The sequence spans 226 residues: Urease accessory protein UreF (226 aa).

This sequence belongs to the UreF family. In terms of assembly, ureD, UreF and UreG form a complex that acts as a GTP-hydrolysis-dependent molecular chaperone, activating the urease apoprotein by helping to assemble the nickel containing metallocenter of UreC. The UreE protein probably delivers the nickel.

The protein resides in the cytoplasm. Required for maturation of urease via the functional incorporation of the urease nickel metallocenter. The protein is Urease accessory protein UreF of Corynebacterium glutamicum (strain R).